Consider the following 85-residue polypeptide: Large ribosomal subunit protein bL27 (85 aa).

The disordered stretch occupies residues 1-22 (MAHKKAGGSTRNGRDSESKRLG).

Belongs to the bacterial ribosomal protein bL27 family.

In Aliivibrio fischeri (strain ATCC 700601 / ES114) (Vibrio fischeri), this protein is Large ribosomal subunit protein bL27.